The primary structure comprises 357 residues: MTPILFIDRDGTLIEEPSDFQIDAYEKLRFVPQVIPALLKLRDAGYQFVIVTNQDGLGSDSYPRASFDGPNELMLQIFESQGITFRDVLIDCSWPQDNAPTRKPGIGLMTAYLQDRSIDWARSGMVGDRITDLQFADNLNIRGFQLRTAQFGGQWDWPGIAHALADAPRTAVVQRDTKETKIRVELDLDRAADAHISTGLPFFDHMLEQIGKHGGFALDIQAEGDLHIDEHHTIEDTGLALGQALREALGDKRGIGRYGFTLPMDETLASAALDFSGRPYFVFEGEFKRERVGDMPTELVPHFFRSLCDASGLNLNLQVRGDNDHHKVEACFKALARALRPALARQGTALPSTKGAL.

Residues 1–168 (MTPILFIDRD…GIAHALADAP (168 aa)) form a histidinol-phosphatase region. The active-site Nucleophile is the aspartate 8. Mg(2+) contacts are provided by aspartate 8, aspartate 10, and aspartate 128. Residue aspartate 10 is the Proton donor of the active site. Residues 169 to 357 (RTAVVQRDTK…TALPSTKGAL (189 aa)) are imidazoleglycerol-phosphate dehydratase.

It in the N-terminal section; belongs to the histidinol-phosphatase family. In the C-terminal section; belongs to the imidazoleglycerol-phosphate dehydratase family. Mg(2+) is required as a cofactor.

Its subcellular location is the cytoplasm. The catalysed reaction is D-erythro-1-(imidazol-4-yl)glycerol 3-phosphate = 3-(imidazol-4-yl)-2-oxopropyl phosphate + H2O. It carries out the reaction L-histidinol phosphate + H2O = L-histidinol + phosphate. The protein operates within amino-acid biosynthesis; L-histidine biosynthesis; L-histidine from 5-phospho-alpha-D-ribose 1-diphosphate: step 6/9. It participates in amino-acid biosynthesis; L-histidine biosynthesis; L-histidine from 5-phospho-alpha-D-ribose 1-diphosphate: step 8/9. The sequence is that of Histidine biosynthesis bifunctional protein HisB from Stenotrophomonas maltophilia (strain K279a).